The primary structure comprises 340 residues: HTH-type transcriptional regulator VirS (340 aa).

An HTH araC/xylS-type domain is found at Glu-236–Tyr-334. 2 DNA-binding regions (H-T-H motif) span residues Glu-254–Gly-275 and Leu-301–Phe-324.

In terms of processing, phosphorylated by PknK. Phosphorylation increases affinity for the mymA promoter.

In terms of biological role, regulates the expression of the mymA operon. The sequence is that of HTH-type transcriptional regulator VirS (virS) from Mycobacterium tuberculosis (strain CDC 1551 / Oshkosh).